The primary structure comprises 226 residues: Large ribosomal subunit protein uL1 (226 aa).

It belongs to the universal ribosomal protein uL1 family. In terms of assembly, part of the 50S ribosomal subunit.

In terms of biological role, binds directly to 23S rRNA. The L1 stalk is quite mobile in the ribosome, and is involved in E site tRNA release. Protein L1 is also a translational repressor protein, it controls the translation of the L11 operon by binding to its mRNA. In Treponema pallidum (strain Nichols), this protein is Large ribosomal subunit protein uL1.